A 229-amino-acid chain; its full sequence is Triosephosphate isomerase (229 aa).

9–11 is a binding site for substrate; that stretch reads NLK. The Electrophile role is filled by His93. Catalysis depends on Glu141, which acts as the Proton acceptor. Residues Ile146, Gly181, and 202–203 each bind substrate; that span reads AS.

Belongs to the triosephosphate isomerase family. In terms of assembly, homotetramer; dimer of dimers.

It is found in the cytoplasm. It catalyses the reaction D-glyceraldehyde 3-phosphate = dihydroxyacetone phosphate. Its pathway is carbohydrate biosynthesis; gluconeogenesis. It functions in the pathway carbohydrate degradation; glycolysis; D-glyceraldehyde 3-phosphate from glycerone phosphate: step 1/1. Functionally, involved in the gluconeogenesis. Catalyzes stereospecifically the conversion of dihydroxyacetone phosphate (DHAP) to D-glyceraldehyde-3-phosphate (G3P). This Pyrobaculum islandicum (strain DSM 4184 / JCM 9189 / GEO3) protein is Triosephosphate isomerase.